The chain runs to 99 residues: A-type ATP synthase subunit F (99 aa).

Belongs to the V-ATPase F subunit family. In terms of assembly, has multiple subunits with at least A(3), B(3), C, D, E, F, H, I and proteolipid K(x).

The protein localises to the cell membrane. Component of the A-type ATP synthase that produces ATP from ADP in the presence of a proton gradient across the membrane. The polypeptide is A-type ATP synthase subunit F (Methanococcus maripaludis (strain C7 / ATCC BAA-1331)).